The primary structure comprises 78 residues: Acyl carrier protein (78 aa).

Residues 1–77 enclose the Carrier domain; the sequence is MALIDEIKDV…DAAKYIEEHK (77 aa). S37 carries the post-translational modification O-(pantetheine 4'-phosphoryl)serine.

The protein belongs to the acyl carrier protein (ACP) family. 4'-phosphopantetheine is transferred from CoA to a specific serine of apo-ACP by AcpS. This modification is essential for activity because fatty acids are bound in thioester linkage to the sulfhydryl of the prosthetic group.

The protein localises to the secreted. Its pathway is lipid metabolism; fatty acid biosynthesis. Carrier of the growing fatty acid chain in fatty acid biosynthesis. Has hemolytic activity forming pores approximately 1 nm in diameter into erythrocytes. Is able to induce murine colonic lesions and to disrupt the integrity of epithelial cell monolayers. This chain is Acyl carrier protein (acpP), found in Brachyspira hyodysenteriae (Treponema hyodysenteriae).